The sequence spans 567 residues: uncharacterized protein (567 aa).

The next 12 membrane-spanning stretches (helical) occupy residues Leu-136–Ala-156, Phe-159–Ile-179, Leu-193–Phe-213, Leu-217–Val-237, Ile-258–Gly-278, Leu-291–Glu-311, Phe-334–Val-354, Leu-364–Met-384, Leu-393–Ile-415, Pro-426–Phe-446, Thr-457–Ile-477, and Ala-536–Leu-553.

Belongs to the major facilitator superfamily.

Its subcellular location is the membrane. This is an uncharacterized protein from Schizosaccharomyces pombe (strain 972 / ATCC 24843) (Fission yeast).